The chain runs to 146 residues: UPF0178 protein BCAH187_A3092 (146 aa).

Belongs to the UPF0178 family.

This is UPF0178 protein BCAH187_A3092 from Bacillus cereus (strain AH187).